We begin with the raw amino-acid sequence, 386 residues long: Synaptotagmin-5 (386 aa).

Positions 1-16 (MFPEPPTLGSPAPKTP) are enriched in pro residues. Residues 1 to 21 (MFPEPPTLGSPAPKTPPDSSR) form a disordered region. Residues 1-24 (MFPEPPTLGSPAPKTPPDSSRIRQ) are Vesicular-facing. A helical transmembrane segment spans residues 25–45 (GAVPAWVLATIVLGSGLLVFS). At 46 to 386 (SCFCLYRKRC…PDRARPIPAP (341 aa)) the chain is on the cytoplasmic side. 2 consecutive C2 domains span residues 108–227 (QLGR…QAWR) and 239–372 (KLGD…AQWH). Residues L138, D139, D145, D197, F198, D199, S202, D205, D270, D276, D330, and D332 each coordinate Ca(2+).

It belongs to the synaptotagmin family. In terms of assembly, homodimer. Interacts with both alpha- and beta-tubulin. Ca(2+) is required as a cofactor.

It is found in the cytoplasmic vesicle. Its subcellular location is the secretory vesicle. The protein resides in the synaptic vesicle membrane. The protein localises to the recycling endosome membrane. May be involved in Ca(2+)-dependent exocytosis of secretory vesicles through Ca(2+) and phospholipid binding to the C2 domain or may serve as Ca(2+) sensors in the process of vesicular trafficking and exocytosis. Regulates the Ca(2+)-dependent secretion of norepinephrine in PC12 cells. Required for export from the endocytic recycling compartment to the cell surface. This chain is Synaptotagmin-5 (Syt5), found in Mus musculus (Mouse).